Reading from the N-terminus, the 955-residue chain is MSSASVTAFEKEHLWMYLQALGFEPGPATIACGKIVSHTHLGVNMFDKLNRDAFHIISYFLFQVLDQSLTKEVFKFCWPPFDQKSDTEFRKHCCEWIKRISGECGSSFPQVVGSLFLSPGGPKFIHLMYHFARFVAMKYIKSNSKNSSHHFVETFNIKPQDLHKCIARCHFARSRFLQILQRQDCVTQKYQENAQLSVKQVRNLRSECIGLENQIKKMEPYDDHSNMEEKIQKVRSLWASVNETLMFLEKEREVVSSVLSLVNQYALDGTNVAINIPRLLLDKIEKQMFQLHIGNVYEAGKLNLLTVIQLLNEVLKVMKYERCQADQARLTVDLHYLEKETKFQKERLSDLKHMRYRIKDDLTTIRHSVVEKQGEWHKKWKEFLGLSPFSLIKGWTPSVDLLPPMSPLSFDPASEEVYAKSILCQYPASLPDAHKQHNQENGCRGDSDTLGALHDLANSPASFLSQSVSSSDRNSVTVLEKDTKMGTPKEKNEAISKKIPEFEVENSPLSDVAKNTESSAFGGSLPAKKSDPFQKEQDHLVEEVARAVLSDSPQLSEGKEIKLEELIDSLGSNPFLTRNQIPRTPENLITEIRSSWRKAIEMEENRTKEPIQMDAEHREVLPESLPVLHNQREFSMADFLLETTVSDFGQSHLTEEKVISDCECVPQKHVLTSHIDEPPTQNQSDLLNKKVICKQDLECLAFTKLSETSRMETFSPAVGNRIDVMGGSEEEFMKILDHLEVSCNKPSTNKTMLWNSFQISSGISSKSFKDNDFGILHETLPEEVGHLSFNSSSSSEANFKLEPNSPMHGGTLLEDVVGGRQTTPESDFNLQALRSRYEALKKSLSKKREESYLSNSQTPERHKPELSPTPQNVQTDDTLNFLDTCDLHTEHIKPSLRTSIGERKRSLSPLIKFSPVEQRLRTTIACSLGELPNLKEEDILNKSLDAKEPPSDLTR.

Residues 188–219 (QKYQENAQLSVKQVRNLRSECIGLENQIKKME) adopt a coiled-coil conformation. At Ser-406 the chain carries Phosphoserine. Positions 474-495 (NSVTVLEKDTKMGTPKEKNEAI) are disordered. Positions 479 to 495 (LEKDTKMGTPKEKNEAI) are enriched in basic and acidic residues. Phosphoserine occurs at positions 507, 524, 530, 550, and 552. Thr-584 is subject to Phosphothreonine. 4 positions are modified to phosphoserine: Ser-715, Ser-728, Ser-742, and Ser-805. A disordered region spans residues 789–814 (FNSSSSSEANFKLEPNSPMHGGTLLE). A Phosphothreonine modification is found at Thr-823. The tract at residues 848 to 876 (REESYLSNSQTPERHKPELSPTPQNVQTD) is disordered. Ser-908, Ser-914, and Ser-943 each carry phosphoserine.

This sequence belongs to the HAUS6 family. In terms of assembly, component of the HAUS augmin-like complex. The complex interacts with the gamma-tubulin ring complex and this interaction is required for spindle assembly. Interacts with PLK1, NEDD1 and gamma-tubulin. Interacts with EML3 (phosphorylated at 'Thr-881'). In terms of processing, phosphorylated during mitosis.

The protein resides in the cytoplasm. It localises to the cytoskeleton. The protein localises to the spindle. Its subcellular location is the microtubule organizing center. It is found in the centrosome. Functionally, contributes to mitotic spindle assembly, maintenance of centrosome integrity and completion of cytokinesis as part of the HAUS augmin-like complex. Promotes the nucleation of microtubules from the spindle through recruitment of NEDD1 and gamma-tubulin. The sequence is that of HAUS augmin-like complex subunit 6 (HAUS6) from Homo sapiens (Human).